We begin with the raw amino-acid sequence, 250 residues long: Hydroxyacylglutathione hydrolase (250 aa).

7 residues coordinate Zn(2+): histidine 53, histidine 55, aspartate 57, histidine 58, histidine 110, aspartate 127, and histidine 165.

It belongs to the metallo-beta-lactamase superfamily. Glyoxalase II family. As to quaternary structure, monomer. It depends on Zn(2+) as a cofactor.

The catalysed reaction is an S-(2-hydroxyacyl)glutathione + H2O = a 2-hydroxy carboxylate + glutathione + H(+). Its pathway is secondary metabolite metabolism; methylglyoxal degradation; (R)-lactate from methylglyoxal: step 2/2. Functionally, thiolesterase that catalyzes the hydrolysis of S-D-lactoyl-glutathione to form glutathione and D-lactic acid. This chain is Hydroxyacylglutathione hydrolase, found in Buchnera aphidicola subsp. Schizaphis graminum (strain Sg).